The sequence spans 151 residues: Deoxyuridine 5'-triphosphate nucleotidohydrolase (151 aa).

Residues 70 to 72, asparagine 83, 87 to 89, and methionine 97 contribute to the substrate site; these read RSG and LID.

The protein belongs to the dUTPase family. Mg(2+) is required as a cofactor.

It catalyses the reaction dUTP + H2O = dUMP + diphosphate + H(+). It participates in pyrimidine metabolism; dUMP biosynthesis; dUMP from dCTP (dUTP route): step 2/2. This enzyme is involved in nucleotide metabolism: it produces dUMP, the immediate precursor of thymidine nucleotides and it decreases the intracellular concentration of dUTP so that uracil cannot be incorporated into DNA. This Pseudomonas fluorescens (strain Pf0-1) protein is Deoxyuridine 5'-triphosphate nucleotidohydrolase.